A 386-amino-acid chain; its full sequence is Succinate--CoA ligase [ADP-forming] subunit beta (386 aa).

The ATP-grasp domain maps to 9-244; sequence KAVLRSYGVS…LDEEDSKEIE (236 aa). Residues K46, 53–55, E99, C102, and E107 each bind ATP; that span reads GRG. Mg(2+) is bound by residues N199 and D213. Substrate is bound by residues N264 and 321 to 323; that span reads GIM.

This sequence belongs to the succinate/malate CoA ligase beta subunit family. As to quaternary structure, heterotetramer of two alpha and two beta subunits. The cofactor is Mg(2+).

The catalysed reaction is succinate + ATP + CoA = succinyl-CoA + ADP + phosphate. It catalyses the reaction GTP + succinate + CoA = succinyl-CoA + GDP + phosphate. It functions in the pathway carbohydrate metabolism; tricarboxylic acid cycle; succinate from succinyl-CoA (ligase route): step 1/1. Functionally, succinyl-CoA synthetase functions in the citric acid cycle (TCA), coupling the hydrolysis of succinyl-CoA to the synthesis of either ATP or GTP and thus represents the only step of substrate-level phosphorylation in the TCA. The beta subunit provides nucleotide specificity of the enzyme and binds the substrate succinate, while the binding sites for coenzyme A and phosphate are found in the alpha subunit. The sequence is that of Succinate--CoA ligase [ADP-forming] subunit beta from Bacillus cereus (strain G9842).